The primary structure comprises 572 residues: Hemagglutinin-neuraminidase (572 aa).

At 1–31 the chain is on the intravirion side; sequence MEYWKHTNHGKDAGNELETSMATHGNKLTNK. A helical transmembrane segment spans residues 32–52; sequence ITYILWTIILVLLSIVFIIVL. Over 53–572 the chain is Virion surface; the sequence is INSIKSEKAH…FKTEIPKSCS (520 aa). Intrachain disulfides connect C190-C214 and C256-C269. The involved in neuraminidase activity stretch occupies residues 252 to 257; that stretch reads NRKSCS. Residues N308 and N351 are each glycosylated (N-linked (GlcNAc...) asparagine; by host). Disulfide bonds link C355–C469 and C463–C473. An N-linked (GlcNAc...) asparagine; by host glycan is attached at N523. Residues C535 and C544 are joined by a disulfide bond.

This sequence belongs to the paramyxoviruses hemagglutinin-neuraminidase family. As to quaternary structure, homotetramer; composed of disulfide-linked homodimers. Interacts with F protein trimer.

Its subcellular location is the virion membrane. It is found in the host cell membrane. The catalysed reaction is Hydrolysis of alpha-(2-&gt;3)-, alpha-(2-&gt;6)-, alpha-(2-&gt;8)- glycosidic linkages of terminal sialic acid residues in oligosaccharides, glycoproteins, glycolipids, colominic acid and synthetic substrates.. Functionally, attaches the virus to sialic acid-containing cell receptors and thereby initiating infection. Binding of HN protein to the receptor induces a conformational change that allows the F protein to trigger virion/cell membranes fusion. Its function is as follows. Neuraminidase activity ensures the efficient spread of the virus by dissociating the mature virions from the neuraminic acid containing glycoproteins. The chain is Hemagglutinin-neuraminidase (HN) from Homo sapiens (Human).